A 397-amino-acid chain; its full sequence is Major outer membrane porin, serovar C (397 aa).

The first 22 residues, 1–22, serve as a signal peptide directing secretion; sequence MKKLLKSVLVFAALSSASSLQA.

Belongs to the chlamydial porin (CP) (TC 1.B.2) family. In terms of assembly, part of a disulfide cross-linked outer membrane complex (COMC) composed of the major outer membrane porin (MOMP), the small cysteine-rich protein (OmcA) and the large cysteine-rich periplasmic protein (OmcB).

Its subcellular location is the cell outer membrane. Functionally, in elementary bodies (EBs, the infectious stage, which is able to survive outside the host cell) provides the structural integrity of the outer envelope through disulfide cross-links with the small cysteine-rich protein and the large cysteine-rich periplasmic protein. It has been described in publications as the Sarkosyl-insoluble COMC (Chlamydia outer membrane complex), and serves as the functional equivalent of peptidoglycan. Permits diffusion of specific solutes through the outer membrane. The sequence is that of Major outer membrane porin, serovar C (ompA) from Chlamydia trachomatis.